The sequence spans 351 residues: MNPPKSAPDAQGLSYRDAGVDIDAGDALIDKIKPFAKKTLRDGVLGGIGGFGALFEVPKKYKEPVLVSGTDGVGTKLKLAFHLNKHDTVGQDLVAMSVNDILVQGAEPLFFLDYFACGKLDVDTAATVVKGIAHGCELSGCALIGGETAEMPGMYPDGEYDLAGFAVGAVEKSKIIDGSTIAEGDVVLGLASSGIHSNGFSLVRKIIERANPDLSADFHGRSLADTLMAPTRIYVKPLLALMQKLPVKGMAHITGGGLVENIPRVLREGLTAELDQNAWPLPPLFKWLQEHGGVADAEMHRVFNCGIGMAVIVSAADADAAIADLTAAGEQVWKIGTVRASREGEAQTVVA.

Belongs to the AIR synthase family.

It localises to the cytoplasm. The catalysed reaction is 2-formamido-N(1)-(5-O-phospho-beta-D-ribosyl)acetamidine + ATP = 5-amino-1-(5-phospho-beta-D-ribosyl)imidazole + ADP + phosphate + H(+). It functions in the pathway purine metabolism; IMP biosynthesis via de novo pathway; 5-amino-1-(5-phospho-D-ribosyl)imidazole from N(2)-formyl-N(1)-(5-phospho-D-ribosyl)glycinamide: step 2/2. This is Phosphoribosylformylglycinamidine cyclo-ligase from Burkholderia ambifaria (strain MC40-6).